The primary structure comprises 632 residues: Probable potassium transport system protein Kup 1 (632 aa).

12 helical membrane passes run 17-37, 60-80, 106-126, 144-164, 175-195, 210-230, 254-274, 292-312, 344-364, 370-390, 401-421, and 426-446; these read LFYL…TSPL, LISL…VLFL, TALL…DAMI, PSLA…LFVV, FFGP…ISHI, AVSF…AVFL, WFLL…ALVL, ALLP…QAVI, IFLP…VLSF, LATA…IMAF, LPVA…FLGA, and IHDG…VMWT.

This sequence belongs to the HAK/KUP transporter (TC 2.A.72) family.

It is found in the cell inner membrane. It carries out the reaction K(+)(in) + H(+)(in) = K(+)(out) + H(+)(out). Its function is as follows. Transport of potassium into the cell. Likely operates as a K(+):H(+) symporter. The sequence is that of Probable potassium transport system protein Kup 1 from Rhizobium etli (strain ATCC 51251 / DSM 11541 / JCM 21823 / NBRC 15573 / CFN 42).